The sequence spans 291 residues: Formamidopyrimidine-DNA glycosylase (291 aa).

The Schiff-base intermediate with DNA role is filled by Pro2. The active-site Proton donor is the Glu3. Lys61 serves as the catalytic Proton donor; for beta-elimination activity. DNA contacts are provided by His103, Arg123, and Arg165. Residues 251-285 form an FPG-type zinc finger; it reads EVYGRGGQACSRCASTIRRDAFMNRSSFSCPACQP. Arg275 acts as the Proton donor; for delta-elimination activity in catalysis.

The protein belongs to the FPG family. In terms of assembly, monomer. Zn(2+) serves as cofactor.

It carries out the reaction Hydrolysis of DNA containing ring-opened 7-methylguanine residues, releasing 2,6-diamino-4-hydroxy-5-(N-methyl)formamidopyrimidine.. It catalyses the reaction 2'-deoxyribonucleotide-(2'-deoxyribose 5'-phosphate)-2'-deoxyribonucleotide-DNA = a 3'-end 2'-deoxyribonucleotide-(2,3-dehydro-2,3-deoxyribose 5'-phosphate)-DNA + a 5'-end 5'-phospho-2'-deoxyribonucleoside-DNA + H(+). In terms of biological role, involved in base excision repair of DNA damaged by oxidation or by mutagenic agents. Acts as a DNA glycosylase that recognizes and removes damaged bases. Has a preference for oxidized purines, such as 7,8-dihydro-8-oxoguanine (8-oxoG). Has AP (apurinic/apyrimidinic) lyase activity and introduces nicks in the DNA strand. Cleaves the DNA backbone by beta-delta elimination to generate a single-strand break at the site of the removed base with both 3'- and 5'-phosphates. The sequence is that of Formamidopyrimidine-DNA glycosylase from Parafrankia sp. (strain EAN1pec).